A 328-amino-acid chain; its full sequence is tRNA dimethylallyltransferase (328 aa).

10-17 (GPTASGKT) provides a ligand contact to ATP. 12-17 (TASGKT) lines the substrate pocket.

This sequence belongs to the IPP transferase family. Monomer. Requires Mg(2+) as cofactor.

It catalyses the reaction adenosine(37) in tRNA + dimethylallyl diphosphate = N(6)-dimethylallyladenosine(37) in tRNA + diphosphate. Its function is as follows. Catalyzes the transfer of a dimethylallyl group onto the adenine at position 37 in tRNAs that read codons beginning with uridine, leading to the formation of N6-(dimethylallyl)adenosine (i(6)A). In Bifidobacterium longum (strain NCC 2705), this protein is tRNA dimethylallyltransferase.